A 538-amino-acid polypeptide reads, in one-letter code: Coiled-coil domain-containing protein 8 (538 aa).

A disordered region spans residues 58–128 (IMEKSTPHPP…QGPRRGKKVR (71 aa)). Positions 119–128 (QGPRRGKKVR) are enriched in basic residues. 3 positions are modified to phosphoserine: Ser-142, Ser-146, and Ser-261. The tract at residues 213-473 (WAPRAGPGVG…GTAPGARARK (261 aa)) is disordered. Basic and acidic residues predominate over residues 301 to 313 (DSQREEAIADQRE). A compositionally biased stretch (low complexity) spans 321-332 (AGAPADQGAEAA). A coiled-coil region spans residues 349–366 (AEEGAEAADNQREEAADN). 3 stretches are compositionally biased toward basic and acidic residues: residues 357 to 373 (DNQREEAADNQRAEAPA), 381 to 392 (DNHREEAADNQR), and 405 to 419 (DNQREEAVHDQRERA). 2 stretches are compositionally biased toward low complexity: residues 428-438 (QRAQARAGQRA) and 458-469 (AAQGTTGTAPGA). A PxLPxI/L motif; mediates interaction with ANKRA2 motif is present at residues 500-506 (PRLPTLP). Positions 514–535 (EARNLRVLRAEARAEAEQGEQE) form a coiled coil.

In terms of assembly, component of the 3M complex, composed of core components CUL7, CCDC8 and OBSL1. Interacts (via PxLPxI/L motif) with ANKRA2 (via ankyrin repeats); may link the 3M complex to histone deacetylases including HDAC4 and HDAC5. As to expression, widely expressed with low levels in spleen, skeletal muscle, small intestine, kidney and liver.

The protein localises to the cytoplasm. The protein resides in the cytoskeleton. It localises to the microtubule organizing center. Its subcellular location is the centrosome. Core component of the 3M complex, a complex required to regulate microtubule dynamics and genome integrity. It is unclear how the 3M complex regulates microtubules, it could act by controlling the level of a microtubule stabilizer. Required for localization of CUL7 to the centrosome. In Homo sapiens (Human), this protein is Coiled-coil domain-containing protein 8 (CCDC8).